A 183-amino-acid chain; its full sequence is Large ribosomal subunit protein uL6 (183 aa).

The protein belongs to the universal ribosomal protein uL6 family. Part of the 50S ribosomal subunit.

In terms of biological role, this protein binds to the 23S rRNA, and is important in its secondary structure. It is located near the subunit interface in the base of the L7/L12 stalk, and near the tRNA binding site of the peptidyltransferase center. This is Large ribosomal subunit protein uL6 from Moorella thermoacetica (strain ATCC 39073 / JCM 9320).